Reading from the N-terminus, the 193-residue chain is Large ribosomal subunit protein eL19A (193 aa).

The disordered stretch occupies residues 156–179 (QEQQDARRARAKAARQRRAKAVEE). The span at 164 to 174 (ARAKAARQRRA) shows a compositional bias: basic residues.

This sequence belongs to the eukaryotic ribosomal protein eL19 family. As to quaternary structure, component of the large ribosomal subunit (LSU). Mature yeast ribosomes consist of a small (40S) and a large (60S) subunit. The 40S small subunit contains 1 molecule of ribosomal RNA (18S rRNA) and at least 33 different proteins. The large 60S subunit contains 3 rRNA molecules (25S, 5.8S and 5S rRNA) and at least 46 different proteins. eL19 lies in close proximity to the binding site for eukaryotic initiation factor eIF4G.

The protein resides in the cytoplasm. In terms of biological role, component of the ribosome, a large ribonucleoprotein complex responsible for the synthesis of proteins in the cell. The small ribosomal subunit (SSU) binds messenger RNAs (mRNAs) and translates the encoded message by selecting cognate aminoacyl-transfer RNA (tRNA) molecules. The large subunit (LSU) contains the ribosomal catalytic site termed the peptidyl transferase center (PTC), which catalyzes the formation of peptide bonds, thereby polymerizing the amino acids delivered by tRNAs into a polypeptide chain. The nascent polypeptides leave the ribosome through a tunnel in the LSU and interact with protein factors that function in enzymatic processing, targeting, and the membrane insertion of nascent chains at the exit of the ribosomal tunnel. eL19 may play a role in the last stages of translation initiation, in particular subunit joining and shedding/releasing factors. This is Large ribosomal subunit protein eL19A (rpl1901) from Schizosaccharomyces pombe (strain 972 / ATCC 24843) (Fission yeast).